The primary structure comprises 845 residues: P protein (845 aa).

The segment at 1 to 57 is disordered; the sequence is MRLENREGRPTSGVLEMELPQASAPSRAGLGSLGLVGLDSSNHRPQQGGSKAGSRGP. The Extracellular segment spans residues 1–183; the sequence is MRLENREGRP…HLSKLRCCVQ (183 aa). Over residues 26–40 the composition is skewed to low complexity; it reads SRAGLGSLGLVGLDS. A helical transmembrane segment spans residues 184 to 204; that stretch reads WLKVSGLFVFVVLCSILFSLY. Residues 205 to 337 are Cytoplasmic-facing; sequence PDQGKFWQLL…QYLRASIEAQ (133 aa). The chain crosses the membrane as a helical span at residues 338-358; it reads VTIAAVILAGVYVLIIFEIVH. Residues 359-360 are Extracellular-facing; that stretch reads RT. Residues 361-381 form a helical membrane-spanning segment; the sequence is LAAMLGSLAALAALAVIGDRP. The Cytoplasmic segment spans residues 382 to 393; that stretch reads TLTQVVEWIDFE. Residues 394–414 form a helical membrane-spanning segment; the sequence is TLALLFGMMILVAIFSETGFF. Residues 415 to 429 lie on the Extracellular side of the membrane; it reads DYCAVKAYQLSRGRV. The chain crosses the membrane as a helical span at residues 430–450; the sequence is WAMIIMLCLIAAVLSAFLDNV. Residues 451–513 lie on the Cytoplasmic side of the membrane; sequence TTALLFTPVT…ELRKMGLDFA (63 aa). The chain crosses the membrane as a helical span at residues 514–534; sequence GFTAHMFAGICFVLLFSFPLL. The Extracellular segment spans residues 535–629; that stretch reads RLLYWNRKLY…KKHRISDRTL (95 aa). The helical transmembrane segment at 630-650 threads the bilayer; it reads LTKCVTVLGLVIFMFFLNSFV. Position 651 (P651) is a topological domain, cytoplasmic. A helical transmembrane segment spans residues 652–672; the sequence is GVHLDLGWIAILGAIWLLILA. Over 673–687 the chain is Extracellular; it reads DIHDFEIILHRVEWA. The chain crosses the membrane as a helical span at residues 688-708; it reads TLLFFAALFILMEALAHLHLI. The Cytoplasmic portion of the chain corresponds to 709–730; it reads EYVGEQTALLIKMVPEDQRLAA. A helical transmembrane segment spans residues 731–751; the sequence is AIIVVVWVSAIASSLIDNIPF. At 752-773 the chain is on the extracellular side; it reads TATMIPVLLNLSRDPEISLPAP. A helical transmembrane segment spans residues 774–794; sequence PLMYALALGACLGGNGTLIGA. Over 795–820 the chain is Cytoplasmic; it reads SANVVCAGIAEQHGYGFSFMEFFRLG. Residues 821 to 841 form a helical membrane-spanning segment; the sequence is FPMMVVSCMVGMCYLLVAHVV. Over 842–845 the chain is Extracellular; it reads MGWN.

It belongs to the CitM (TC 2.A.11) transporter family.

It localises to the melanosome membrane. It catalyses the reaction chloride(in) = chloride(out). Functionally, contributes to a melanosome-specific anion (chloride) current that modulates melanosomal pH for optimal tyrosinase activity required for melanogenesis and the melanosome maturation. One of the components of the mammalian pigmentary system. May serve as a key control point at which ethnic skin color variation is determined. Major determinant of brown and/or blue eye color. Seems to regulate the post-translational processing of tyrosinase, which catalyzes the limiting reaction in melanin synthesis. This is P protein (Oca2) from Sus scrofa (Pig).